The following is a 161-amino-acid chain: Regulator of ribonuclease activity A (161 aa).

Belongs to the RraA family. Homotrimer. Binds to both RNA-binding sites in the C-terminal region of Rne and to RhlB.

It is found in the cytoplasm. Its function is as follows. Globally modulates RNA abundance by binding to RNase E (Rne) and regulating its endonucleolytic activity. Can modulate Rne action in a substrate-dependent manner by altering the composition of the degradosome. Modulates RNA-binding and helicase activities of the degradosome. The sequence is that of Regulator of ribonuclease activity A from Cronobacter sakazakii (strain ATCC BAA-894) (Enterobacter sakazakii).